Consider the following 565-residue polypeptide: NAD-dependent malic enzyme (565 aa).

The active-site Proton donor is tyrosine 103. The Proton acceptor role is filled by lysine 177. Residues glutamate 248, aspartate 249, and aspartate 272 each coordinate a divalent metal cation. Aspartate 272 and asparagine 419 together coordinate NAD(+). Phosphoserine is present on serine 445.

It belongs to the malic enzymes family. Mg(2+) is required as a cofactor. The cofactor is Mn(2+).

It catalyses the reaction (S)-malate + NAD(+) = pyruvate + CO2 + NADH. It carries out the reaction oxaloacetate + H(+) = pyruvate + CO2. The protein is NAD-dependent malic enzyme (mae2) of Schizosaccharomyces pombe (strain 972 / ATCC 24843) (Fission yeast).